A 189-amino-acid polypeptide reads, in one-letter code: UPF0301 protein CTA_0231 (189 aa).

This sequence belongs to the UPF0301 (AlgH) family.

The sequence is that of UPF0301 protein CTA_0231 from Chlamydia trachomatis serovar A (strain ATCC VR-571B / DSM 19440 / HAR-13).